Reading from the N-terminus, the 61-residue chain is Sperm protamine P1 (61 aa).

The segment at 1–61 (MARFRRSRSR…RSSRRSRRRN (61 aa)) is disordered.

This sequence belongs to the protamine P1 family. Testis.

It is found in the nucleus. The protein localises to the chromosome. Its function is as follows. Protamines substitute for histones in the chromatin of sperm during the haploid phase of spermatogenesis. They compact sperm DNA into a highly condensed, stable and inactive complex. The sequence is that of Sperm protamine P1 (PRM1) from Ornithorhynchus anatinus (Duckbill platypus).